A 228-amino-acid polypeptide reads, in one-letter code: Octanoyltransferase (228 aa).

Positions 30-214 (KKIGDTLLLL…YFGKVFGKSL (185 aa)) constitute a BPL/LPL catalytic domain. Residues 75–82 (RGGDVTYH), 144–146 (AIG), and 157–159 (GFA) contribute to the substrate site. Cys-175 serves as the catalytic Acyl-thioester intermediate.

The protein belongs to the LipB family.

The protein resides in the cytoplasm. The enzyme catalyses octanoyl-[ACP] + L-lysyl-[protein] = N(6)-octanoyl-L-lysyl-[protein] + holo-[ACP] + H(+). The protein operates within protein modification; protein lipoylation via endogenous pathway; protein N(6)-(lipoyl)lysine from octanoyl-[acyl-carrier-protein]: step 1/2. Catalyzes the transfer of endogenously produced octanoic acid from octanoyl-acyl-carrier-protein onto the lipoyl domains of lipoate-dependent enzymes. Lipoyl-ACP can also act as a substrate although octanoyl-ACP is likely to be the physiological substrate. This chain is Octanoyltransferase, found in Caldicellulosiruptor bescii (strain ATCC BAA-1888 / DSM 6725 / KCTC 15123 / Z-1320) (Anaerocellum thermophilum).